A 256-amino-acid chain; its full sequence is Thiazole synthase (256 aa).

Residue K95 is the Schiff-base intermediate with DXP of the active site. 1-deoxy-D-xylulose 5-phosphate-binding positions include G156, A182–G183, and N204–T205.

This sequence belongs to the ThiG family. As to quaternary structure, homotetramer. Forms heterodimers with either ThiH or ThiS.

It is found in the cytoplasm. The enzyme catalyses [ThiS sulfur-carrier protein]-C-terminal-Gly-aminoethanethioate + 2-iminoacetate + 1-deoxy-D-xylulose 5-phosphate = [ThiS sulfur-carrier protein]-C-terminal Gly-Gly + 2-[(2R,5Z)-2-carboxy-4-methylthiazol-5(2H)-ylidene]ethyl phosphate + 2 H2O + H(+). The protein operates within cofactor biosynthesis; thiamine diphosphate biosynthesis. Functionally, catalyzes the rearrangement of 1-deoxy-D-xylulose 5-phosphate (DXP) to produce the thiazole phosphate moiety of thiamine. Sulfur is provided by the thiocarboxylate moiety of the carrier protein ThiS. In vitro, sulfur can be provided by H(2)S. This Shigella flexneri protein is Thiazole synthase.